Consider the following 316-residue polypeptide: Probable cell division protein WhiA (316 aa).

A DNA-binding region (H-T-H motif) is located at residues 275–309 (TLKELGEMVSGGKISKSGINHRLRKIDEIAEKLRA).

Belongs to the WhiA family.

Its function is as follows. Involved in cell division and chromosome segregation. The sequence is that of Probable cell division protein WhiA from Bacillus cereus (strain B4264).